The following is a 468-amino-acid chain: Protein NEN1 (468 aa).

The Exonuclease domain occupies 11 to 172 (FFDVETTVPK…DDVRMNLEVL (162 aa)). Mg(2+) contacts are provided by aspartate 13 and glutamate 15. Histidine 159 serves as the catalytic Proton donor/acceptor. Residue aspartate 164 coordinates Mg(2+).

It depends on Mg(2+) as a cofactor. Expressed in the sieve elements and phloem pole pericycle cells.

Its subcellular location is the cytoplasm. The protein localises to the nucleus. Functionally, probable exonuclease involved in enuclation of sieve elements. The protein is Protein NEN1 of Arabidopsis thaliana (Mouse-ear cress).